The following is a 149-amino-acid chain: MQVILLDKIVHLGNVGDQVNVKSGFARNFLIPQGKAVMATKANIEFFEARRAEFEAKAATELAEAQARAEKIAALESVTIVSKAGEEGRLFGSITTRDIADAVTAAGVEVSKSEVRLSTGPLRTTGDHEVRFQLHGEVFTTLNVVVVAE.

It belongs to the bacterial ribosomal protein bL9 family.

Binds to the 23S rRNA. The chain is Large ribosomal subunit protein bL9 from Actinobacillus succinogenes (strain ATCC 55618 / DSM 22257 / CCUG 43843 / 130Z).